The sequence spans 2521 residues: Partially reducing polyketide synthase tpeA (2521 aa).

One can recognise a Ketosynthase family 3 (KS3) domain in the interval 7–434 (DQSIAVIGLS…GSNAHAIIDN (428 aa)). Residues 47 to 66 (RWNSRRFQDDKNHSQNTSRT) form a disordered region. Active-site for beta-ketoacyl synthase activity residues include Cys-180, His-315, and His-357. Residues 554–855 (YVFTGQGAQW…LRGPVTQILQ (302 aa)) form the Malonyl-CoA:ACP transacylase (MAT) domain. Positions 948–1088 (SSFIGLPMPS…GLVTVEFEQL (141 aa)) are N-terminal hotdog fold. A PKS/mFAS DH domain is found at 948–1258 (SSFIGLPMPS…CVEMPSTAGV (311 aa)). The tract at residues 949–1256 (SFIGLPMPSF…LTCVEMPSTA (308 aa)) is dehydratase (DH) domain. The tract at residues 1100-1258 (TTVQQAEAFY…CVEMPSTAGV (159 aa)) is C-terminal hotdog fold. The 313-residue stretch at 1809–2121 (GMLNTLCFQA…DNRHHGKITL (313 aa)) folds into the Enoyl reductase (ER) domain. A Ketoreductase (KR) domain is found at 2146 to 2323 (TYLIAGGLGG…AVTIDLGIVK (178 aa)). The Carrier domain maps to 2433-2510 (DAVLFVTGAV…SFARDLVGKG (78 aa)). Position 2470 is an O-(pantetheine 4'-phosphoryl)serine (Ser-2470).

Pantetheine 4'-phosphate is required as a cofactor.

It functions in the pathway secondary metabolite biosynthesis. In terms of biological role, partially reducing polyketide synthase; part of the gene cluster that mediates the biosynthesis of polyesters containing 2,4-dihydroxy-6-(2-hydroxypropyl)benzoate and 3-hydroxybutyrate moieties, such as talapolyester G, 15G256beta and 15G256beta-2; as well as to oxidized derivatives such as 15G256alpha. The biosynthesis of the polyesters probably starts with the formation of the diketide 3-hydroxybutyryl-S-ACP catalyzed by the partially reducing polyketide synthase tpeA. The acceptance of 3-hydroxybutyryl by the non-reducing polyketide synthase tpeB would initiate further elongation and cyclization, catalyzed by KS and PT, respectively, to form 2,4-dihydroxy-6-(2-hydroxyn-propyl)benzoyl-S-ACP intermediate. The TE domain could catalyze lactonization at this step to yield 6-hydroxymellein as a derailment product. The polyesterification process maybe occurs when additional molecules of 3-hydroxybutyryl are transferred to tpeB. Following the first esterification step, an intramolecular cyclization catalyzed by the TE domain of tpeB would give talarodioxadione 1, whereas the ethyl esterification of talapolyester G perhaps happens spontaneously. Further oxidation by the cytochrome P450 monooxygenase tpeC then leads to the formation of oxidized derivatives. This is Partially reducing polyketide synthase tpeA from Talaromyces stipitatus (strain ATCC 10500 / CBS 375.48 / QM 6759 / NRRL 1006) (Penicillium stipitatum).